The following is a 389-amino-acid chain: MSVIKMTDLDLAGKRLFIRADLNVPVKDGKVTSDARIRATIPTLKLALEKGAKVMVTSHLGRPTEGEFKPEDSLQPVVDYLKDAGFNVRLAQNYLDGVEVNEGEIVVLENVRINKGEKKNDPELGKKYAALCDVFVMDAFGTAHRAQASTYGVAEYAPVACAGPLLAAELDALGKALKEPQRPMLAIVGGSKVSTKLTVLDSLSKIADQLIVGGGIANTFIAAEGHNVGKSLYEEDLIPEAKRLAAATNIPVPVDVRVGTEFSENAPATEKSVTEVQADESIFDIGDKSAEELAKIIKSAKTILWNGPVGVFEFPNFRKGTEVISNAIAEATANGAFSIAGGGDTLAAIDLFGIKDKISYISTGGGAFLEFVEGKVLPAVEILEKRANG.

Residues aspartate 21–asparagine 23, arginine 36, histidine 59–arginine 62, arginine 112, and arginine 145 contribute to the substrate site. ATP contacts are provided by residues lysine 196, glutamate 313, and glycine 342–threonine 345.

Belongs to the phosphoglycerate kinase family. In terms of assembly, monomer.

It localises to the cytoplasm. It carries out the reaction (2R)-3-phosphoglycerate + ATP = (2R)-3-phospho-glyceroyl phosphate + ADP. It participates in carbohydrate degradation; glycolysis; pyruvate from D-glyceraldehyde 3-phosphate: step 2/5. The sequence is that of Phosphoglycerate kinase from Mannheimia succiniciproducens (strain KCTC 0769BP / MBEL55E).